The following is a 314-amino-acid chain: Formimidoylglutamase (314 aa).

Positions 127, 153, 155, 157, 245, and 247 each coordinate Mn(2+).

Belongs to the arginase family. It depends on Mn(2+) as a cofactor.

The enzyme catalyses N-formimidoyl-L-glutamate + H2O = formamide + L-glutamate. Its pathway is amino-acid degradation; L-histidine degradation into L-glutamate; L-glutamate from N-formimidoyl-L-glutamate (hydrolase route): step 1/1. Catalyzes the conversion of N-formimidoyl-L-glutamate to L-glutamate and formamide. This is Formimidoylglutamase from Aeromonas salmonicida (strain A449).